Here is a 217-residue protein sequence, read N- to C-terminus: Small ribosomal subunit protein uS3 (217 aa).

Residues 38-106 enclose the KH type-2 domain; it reads IRKFVQKELA…QVHINIIEIK (69 aa).

This sequence belongs to the universal ribosomal protein uS3 family. As to quaternary structure, part of the 30S ribosomal subunit. Forms a tight complex with proteins S10 and S14.

Its function is as follows. Binds the lower part of the 30S subunit head. Binds mRNA in the 70S ribosome, positioning it for translation. This chain is Small ribosomal subunit protein uS3, found in Streptococcus pneumoniae serotype 19F (strain G54).